We begin with the raw amino-acid sequence, 106 residues long: Large ribosomal subunit protein uL24 (106 aa).

Belongs to the universal ribosomal protein uL24 family. As to quaternary structure, part of the 50S ribosomal subunit.

One of two assembly initiator proteins, it binds directly to the 5'-end of the 23S rRNA, where it nucleates assembly of the 50S subunit. Its function is as follows. One of the proteins that surrounds the polypeptide exit tunnel on the outside of the subunit. The protein is Large ribosomal subunit protein uL24 of Bordetella petrii (strain ATCC BAA-461 / DSM 12804 / CCUG 43448).